We begin with the raw amino-acid sequence, 205 residues long: Glycerol-3-phosphate acyltransferase (205 aa).

6 helical membrane passes run 7-27 (MTAL…VWVC), 54-74 (VVPA…VLWV), 80-100 (LPIW…SYPL), 116-136 (VLLM…ALLA), 141-161 (TAAV…YWLA), and 163-183 (EATL…AWNI).

Belongs to the PlsY family. Probably interacts with PlsX.

The protein localises to the cell inner membrane. It carries out the reaction an acyl phosphate + sn-glycerol 3-phosphate = a 1-acyl-sn-glycero-3-phosphate + phosphate. The protein operates within lipid metabolism; phospholipid metabolism. Functionally, catalyzes the transfer of an acyl group from acyl-phosphate (acyl-PO(4)) to glycerol-3-phosphate (G3P) to form lysophosphatidic acid (LPA). This enzyme utilizes acyl-phosphate as fatty acyl donor, but not acyl-CoA or acyl-ACP. In Chromohalobacter salexigens (strain ATCC BAA-138 / DSM 3043 / CIP 106854 / NCIMB 13768 / 1H11), this protein is Glycerol-3-phosphate acyltransferase.